A 430-amino-acid polypeptide reads, in one-letter code: Adenylosuccinate synthetase (430 aa).

Residues G12 to K18 and G40 to T42 contribute to the GTP site. Residue D13 is the Proton acceptor of the active site. 2 residues coordinate Mg(2+): D13 and G40. IMP is bound by residues D13–K16, N38–H41, T130, R144, Q224, T239, and R303. The Proton donor role is filled by H41. A substrate-binding site is contributed by V299–R305. GTP is bound by residues R305, K331–D333, and S413–S415.

It belongs to the adenylosuccinate synthetase family. As to quaternary structure, homodimer. Requires Mg(2+) as cofactor.

The protein resides in the cytoplasm. The enzyme catalyses IMP + L-aspartate + GTP = N(6)-(1,2-dicarboxyethyl)-AMP + GDP + phosphate + 2 H(+). The protein operates within purine metabolism; AMP biosynthesis via de novo pathway; AMP from IMP: step 1/2. In terms of biological role, plays an important role in the de novo pathway of purine nucleotide biosynthesis. Catalyzes the first committed step in the biosynthesis of AMP from IMP. The polypeptide is Adenylosuccinate synthetase (Azorhizobium caulinodans (strain ATCC 43989 / DSM 5975 / JCM 20966 / LMG 6465 / NBRC 14845 / NCIMB 13405 / ORS 571)).